Reading from the N-terminus, the 502-residue chain is Cytochrome P450 71B17 (502 aa).

The helical transmembrane segment at 1 to 21 (MAISLLCLFLITFVSLTIVGC) threads the bilayer. Cysteine 444 lines the heme pocket.

Belongs to the cytochrome P450 family. Requires heme as cofactor.

The protein localises to the membrane. The protein is Cytochrome P450 71B17 (CYP71B17) of Arabidopsis thaliana (Mouse-ear cress).